We begin with the raw amino-acid sequence, 124 residues long: Large ribosomal subunit protein bL12 (124 aa).

Belongs to the bacterial ribosomal protein bL12 family. Homodimer. Part of the ribosomal stalk of the 50S ribosomal subunit. Forms a multimeric L10(L12)X complex, where L10 forms an elongated spine to which 2 to 4 L12 dimers bind in a sequential fashion. Binds GTP-bound translation factors.

In terms of biological role, forms part of the ribosomal stalk which helps the ribosome interact with GTP-bound translation factors. Is thus essential for accurate translation. In Brucella anthropi (strain ATCC 49188 / DSM 6882 / CCUG 24695 / JCM 21032 / LMG 3331 / NBRC 15819 / NCTC 12168 / Alc 37) (Ochrobactrum anthropi), this protein is Large ribosomal subunit protein bL12.